We begin with the raw amino-acid sequence, 667 residues long: Leucine aminopeptidase 2 (667 aa).

A peptide contacts are provided by residues 188–190 (QCQ) and 318–323 (PYGGME). His-347 contacts Zn(2+). The active-site Proton acceptor is Glu-348. Zn(2+) contacts are provided by His-351 and Glu-370. Residue Tyr-436 is the Proton donor of the active site.

Belongs to the peptidase M1 family. Zn(2+) serves as cofactor.

It is found in the cytoplasm. The protein localises to the nucleus. The catalysed reaction is an epoxide + H2O = an ethanediol. Functionally, aminopeptidase that preferentially cleaves di- and tripeptides. Also has low epoxide hydrolase activity (in vitro). Can hydrolyze the epoxide leukotriene LTA(4) but it forms preferentially 5,6-dihydroxy-7,9,11,14-eicosatetraenoic acid rather than the cytokine leukotriene B(4) as the product compared to the homologous mammalian enzyme (in vitro). The chain is Leucine aminopeptidase 2 (ara-1) from Neurospora crassa (strain ATCC 24698 / 74-OR23-1A / CBS 708.71 / DSM 1257 / FGSC 987).